Consider the following 102-residue polypeptide: Putative pterin-4-alpha-carbinolamine dehydratase (102 aa).

This sequence belongs to the pterin-4-alpha-carbinolamine dehydratase family.

The catalysed reaction is (4aS,6R)-4a-hydroxy-L-erythro-5,6,7,8-tetrahydrobiopterin = (6R)-L-erythro-6,7-dihydrobiopterin + H2O. The polypeptide is Putative pterin-4-alpha-carbinolamine dehydratase (Burkholderia vietnamiensis (strain G4 / LMG 22486) (Burkholderia cepacia (strain R1808))).